The sequence spans 181 residues: Adenine phosphoribosyltransferase (181 aa).

It belongs to the purine/pyrimidine phosphoribosyltransferase family. Homodimer.

The protein localises to the cytoplasm. The enzyme catalyses AMP + diphosphate = 5-phospho-alpha-D-ribose 1-diphosphate + adenine. The protein operates within purine metabolism; AMP biosynthesis via salvage pathway; AMP from adenine: step 1/1. Its function is as follows. Catalyzes a salvage reaction resulting in the formation of AMP, that is energically less costly than de novo synthesis. This is Adenine phosphoribosyltransferase from Psychromonas ingrahamii (strain DSM 17664 / CCUG 51855 / 37).